Here is a 96-residue protein sequence, read N- to C-terminus: Small ribosomal subunit protein bS20 (96 aa).

This sequence belongs to the bacterial ribosomal protein bS20 family.

Functionally, binds directly to 16S ribosomal RNA. The protein is Small ribosomal subunit protein bS20 of Anaplasma phagocytophilum (strain HZ).